We begin with the raw amino-acid sequence, 335 residues long: Probable cytosolic iron-sulfur protein assembly protein Ciao1 (335 aa).

WD repeat units lie at residues 12-51 (GHKG…WSTK), 57-96 (GHKR…FECN), 101-140 (GHEN…EFEC), 146-185 (PHTQ…NDWD), 192-231 (SHTS…NTAG), 250-289 (QHSR…KPDE), and 301-335 (AHDQ…KVTE).

The protein belongs to the WD repeat CIA1 family. Post-translationally, conjugated to URM1, a ubiquitin-like protein.

Its function is as follows. Essential component of the cytosolic iron-sulfur (Fe/S) protein assembly machinery. Required for the maturation of extramitochondrial Fe/S proteins. The polypeptide is Probable cytosolic iron-sulfur protein assembly protein Ciao1 (Drosophila melanogaster (Fruit fly)).